We begin with the raw amino-acid sequence, 150 residues long: uncharacterized protein (150 aa).

Positions 81 to 90 (TTKPSCSFAQ) are enriched in polar residues. The interval 81–125 (TTKPSCSFAQPVTPRTREGAGVRGHRRRRRGSLSLIPWKTSNDKQ) is disordered.

This is an uncharacterized protein from Homo sapiens (Human).